Reading from the N-terminus, the 282-residue chain is Methyltransferase tpcH (282 aa).

This sequence belongs to the class I-like SAM-binding methyltransferase superfamily. In terms of tissue distribution, specifically expressed in conidia.

The protein operates within secondary metabolite biosynthesis. Methyltransferase; part of the gene cluster that mediates the biosynthesis of trypacidin, a mycotoxin with antiprotozoal activity and that plays a role in the infection process. The pathway begins with the synthesis of atrochrysone thioester by the polyketide synthase (PKS) tpcC. The atrochrysone carboxyl ACP thioesterase tpcB then breaks the thioester bond and releases the atrochrysone carboxylic acid from tpcC. The decarboxylase tpcK converts atrochrysone carboxylic acid to atrochrysone which is further reduced into emodin anthrone. The next step is performed by the emodin anthrone oxygenase tpcL that catalyzes the oxidation of emodinanthrone to emodin. Emodin O-methyltransferase encoded by tpcA catalyzes methylation of the 8-hydroxy group of emodin to form questin. Ring cleavage of questin by questin oxidase tpcI leads to desmethylsulochrin via several intermediates including questin epoxide. Another methylation step catalyzed by tpcM leads to the formation of sulochrin which is further converted to monomethylsulfochrin by tpcH. Finally, the tpcJ catalyzes the conversion of monomethylsulfochrin to trypacidin. Trypacidin is toxic for human pulmonary and bronchial epithelial cells by initiating the intracellular formation of nitric oxide (NO) and hydrogen peroxide (H(2)O(2)), thus triggering host necrotic cell death. The trypacidin pathway is also able to produce endocrocin via a distinct route from the endocrocin Enc pathway. This Aspergillus fumigatus (strain ATCC MYA-4609 / CBS 101355 / FGSC A1100 / Af293) (Neosartorya fumigata) protein is Methyltransferase tpcH.